The sequence spans 225 residues: Uracil-DNA glycosylase (225 aa).

Aspartate 65 acts as the Proton acceptor in catalysis.

The protein belongs to the uracil-DNA glycosylase (UDG) superfamily. UNG family.

The protein localises to the cytoplasm. It catalyses the reaction Hydrolyzes single-stranded DNA or mismatched double-stranded DNA and polynucleotides, releasing free uracil.. Its function is as follows. Excises uracil residues from the DNA which can arise as a result of misincorporation of dUMP residues by DNA polymerase or due to deamination of cytosine. This is Uracil-DNA glycosylase from Clostridium perfringens (strain 13 / Type A).